A 432-amino-acid polypeptide reads, in one-letter code: Gamma-glutamyl phosphate reductase (432 aa).

It belongs to the gamma-glutamyl phosphate reductase family.

It is found in the cytoplasm. The enzyme catalyses L-glutamate 5-semialdehyde + phosphate + NADP(+) = L-glutamyl 5-phosphate + NADPH + H(+). The protein operates within amino-acid biosynthesis; L-proline biosynthesis; L-glutamate 5-semialdehyde from L-glutamate: step 2/2. Catalyzes the NADPH-dependent reduction of L-glutamate 5-phosphate into L-glutamate 5-semialdehyde and phosphate. The product spontaneously undergoes cyclization to form 1-pyrroline-5-carboxylate. This chain is Gamma-glutamyl phosphate reductase, found in Brachyspira hyodysenteriae (strain ATCC 49526 / WA1).